Reading from the N-terminus, the 111-residue chain is Nucleoid-associated protein TTE0040 (111 aa).

It belongs to the YbaB/EbfC family. Homodimer.

The protein resides in the cytoplasm. It is found in the nucleoid. Binds to DNA and alters its conformation. May be involved in regulation of gene expression, nucleoid organization and DNA protection. This chain is Nucleoid-associated protein TTE0040, found in Caldanaerobacter subterraneus subsp. tengcongensis (strain DSM 15242 / JCM 11007 / NBRC 100824 / MB4) (Thermoanaerobacter tengcongensis).